We begin with the raw amino-acid sequence, 890 residues long: uncharacterized protein (890 aa).

The first 20 residues, 1–20, serve as a signal peptide directing secretion; sequence MKILKSLVLLVLFMAMPAKA. The next 6 helical transmembrane spans lie at 518–538, 567–587, 613–633, 651–671, 684–704, and 775–795; these read AALT…ALKL, TYFF…VVGA, LLFI…IITI, VIAF…IILM, ISTL…FLLI, and FLVL…SYGL. A disordered region spans residues 860–890; it reads KARKPEGGEHTNKFLAERNDVPKKEEGERKE. The segment covering 862–890 has biased composition (basic and acidic residues); sequence RKPEGGEHTNKFLAERNDVPKKEEGERKE.

It belongs to the TrbL/VirB6 family.

The protein localises to the cell membrane. This is an uncharacterized protein from Rickettsia felis (strain ATCC VR-1525 / URRWXCal2) (Rickettsia azadi).